Reading from the N-terminus, the 1205-residue chain is cGMP-specific 3',5'-cyclic phosphodiesterase (1205 aa).

Residues 1–153 (MTDVSSPAGG…TKASTTASQQ (153 aa)) form a disordered region. Residues 18-32 (TTSSSPAATTSASSS) are compositionally biased toward low complexity. Polar residues predominate over residues 33–48 (KPLTNGANKTTISTTA). Positions 62–71 (GAIPASSSSG) are enriched in low complexity. Over residues 83-94 (SNNNRPAATNRS) the composition is skewed to polar residues. The span at 118–140 (SSSSPSQSPSQTQASIQTQTSQQ) shows a compositional bias: low complexity. GAF domains lie at 259 to 411 (DIDV…GIGI) and 443 to 624 (NLEC…GLGI). Residues 654-1052 (SQDQTEKLTQ…RNWQDLAEKV (399 aa)) form the PDEase domain. The Proton donor role is filled by histidine 730. Residues histidine 734, histidine 770, aspartate 771, and aspartate 956 each contribute to the a divalent metal cation site. Disordered regions lie at residues 1093–1122 (QQSQ…TGAL) and 1152–1205 (SHVS…CALL). Composition is skewed to basic and acidic residues over residues 1098–1109 (GSEDSHTPEHQR) and 1152–1162 (SHVSEDMDDKS). Positions 1171–1191 (ASGSMGRMSASSSTSSAGGQM) are enriched in low complexity. Positions 1195-1205 (SKKRSKLCALL) are enriched in basic residues. At cysteine 1202 the chain carries Cysteine methyl ester. The S-farnesyl cysteine moiety is linked to residue cysteine 1202. Residues 1203–1205 (ALL) constitute a propeptide, removed in mature form.

It belongs to the cyclic nucleotide phosphodiesterase family. In terms of assembly, interacts with PrBP. The cofactor is a divalent metal cation.

It is found in the cell membrane. It catalyses the reaction 3',5'-cyclic GMP + H2O = GMP + H(+). In terms of biological role, has a role regulating cGMP transport in Malpighian tubule principal cells. This chain is cGMP-specific 3',5'-cyclic phosphodiesterase, found in Drosophila sechellia (Fruit fly).